Reading from the N-terminus, the 447-residue chain is UDP-N-acetylmuramoylalanine--D-glutamate ligase (447 aa).

Residue 130 to 136 participates in ATP binding; that stretch reads GTSGKTT.

The protein belongs to the MurCDEF family.

Its subcellular location is the cytoplasm. It carries out the reaction UDP-N-acetyl-alpha-D-muramoyl-L-alanine + D-glutamate + ATP = UDP-N-acetyl-alpha-D-muramoyl-L-alanyl-D-glutamate + ADP + phosphate + H(+). It functions in the pathway cell wall biogenesis; peptidoglycan biosynthesis. Its function is as follows. Cell wall formation. Catalyzes the addition of glutamate to the nucleotide precursor UDP-N-acetylmuramoyl-L-alanine (UMA). The chain is UDP-N-acetylmuramoylalanine--D-glutamate ligase from Oleidesulfovibrio alaskensis (strain ATCC BAA-1058 / DSM 17464 / G20) (Desulfovibrio alaskensis).